The primary structure comprises 196 residues: Pyridoxal 5'-phosphate synthase subunit PdxT (196 aa).

47–49 is a binding site for L-glutamine; the sequence is GES. Catalysis depends on cysteine 79, which acts as the Nucleophile. L-glutamine is bound by residues arginine 106 and 134–135; that span reads IR. Residues histidine 170 and glutamate 172 each act as charge relay system in the active site.

This sequence belongs to the glutaminase PdxT/SNO family. In the presence of PdxS, forms a dodecamer of heterodimers. Only shows activity in the heterodimer.

The enzyme catalyses aldehydo-D-ribose 5-phosphate + D-glyceraldehyde 3-phosphate + L-glutamine = pyridoxal 5'-phosphate + L-glutamate + phosphate + 3 H2O + H(+). The catalysed reaction is L-glutamine + H2O = L-glutamate + NH4(+). The protein operates within cofactor biosynthesis; pyridoxal 5'-phosphate biosynthesis. Catalyzes the hydrolysis of glutamine to glutamate and ammonia as part of the biosynthesis of pyridoxal 5'-phosphate. The resulting ammonia molecule is channeled to the active site of PdxS. The sequence is that of Pyridoxal 5'-phosphate synthase subunit PdxT from Bacillus thuringiensis subsp. konkukian (strain 97-27).